The primary structure comprises 197 residues: Probable GTP-binding protein EngB (197 aa).

Residues Ala22–Val195 form the EngB-type G domain. GTP contacts are provided by residues Gly30–Ser37, Gly57–Thr61, Asp75–Gly78, Thr142–Asp145, and Phe174–Ala176. Residues Ser37 and Thr59 each coordinate Mg(2+).

The protein belongs to the TRAFAC class TrmE-Era-EngA-EngB-Septin-like GTPase superfamily. EngB GTPase family. Mg(2+) serves as cofactor.

Its function is as follows. Necessary for normal cell division and for the maintenance of normal septation. This is Probable GTP-binding protein EngB from Limosilactobacillus fermentum (strain NBRC 3956 / LMG 18251) (Lactobacillus fermentum).